We begin with the raw amino-acid sequence, 275 residues long: 3-methyl-2-oxobutanoate hydroxymethyltransferase (275 aa).

Mg(2+) is bound by residues D44 and D83. Residues 44 to 45 (DS), D83, and K113 contribute to the 3-methyl-2-oxobutanoate site. E115 lines the Mg(2+) pocket. The Proton acceptor role is filled by E182.

This sequence belongs to the PanB family. Homodecamer; pentamer of dimers. Mg(2+) serves as cofactor.

The protein resides in the cytoplasm. It catalyses the reaction 3-methyl-2-oxobutanoate + (6R)-5,10-methylene-5,6,7,8-tetrahydrofolate + H2O = 2-dehydropantoate + (6S)-5,6,7,8-tetrahydrofolate. The protein operates within cofactor biosynthesis; (R)-pantothenate biosynthesis; (R)-pantoate from 3-methyl-2-oxobutanoate: step 1/2. Catalyzes the reversible reaction in which hydroxymethyl group from 5,10-methylenetetrahydrofolate is transferred onto alpha-ketoisovalerate to form ketopantoate. The protein is 3-methyl-2-oxobutanoate hydroxymethyltransferase of Clostridium botulinum (strain 657 / Type Ba4).